The sequence spans 279 residues: Tryptophan synthase alpha chain (279 aa).

Catalysis depends on proton acceptor residues Glu-63 and Asp-74.

Belongs to the TrpA family. Tetramer of two alpha and two beta chains.

It carries out the reaction (1S,2R)-1-C-(indol-3-yl)glycerol 3-phosphate + L-serine = D-glyceraldehyde 3-phosphate + L-tryptophan + H2O. The protein operates within amino-acid biosynthesis; L-tryptophan biosynthesis; L-tryptophan from chorismate: step 5/5. In terms of biological role, the alpha subunit is responsible for the aldol cleavage of indoleglycerol phosphate to indole and glyceraldehyde 3-phosphate. This is Tryptophan synthase alpha chain from Prochlorococcus marinus subsp. pastoris (strain CCMP1986 / NIES-2087 / MED4).